A 244-amino-acid polypeptide reads, in one-letter code: Transcriptional regulatory protein YpdB (244 aa).

A Response regulatory domain is found at 2 to 116 (KVIIVEDEFL…RITGMLQKLE (115 aa)). A 4-aspartylphosphate modification is found at aspartate 53. One can recognise an HTH LytTR-type domain in the interval 139 to 244 (INLVKDERII…VKEFRQLMHL (106 aa)).

In terms of processing, phosphorylated by YpdA.

It is found in the cytoplasm. In terms of biological role, member of the two-component regulatory system YpdA/YpdB. YpdB regulates expression of yhjX by binding to its promoter region. This Escherichia coli O157:H7 protein is Transcriptional regulatory protein YpdB (ypdB).